Here is an 827-residue protein sequence, read N- to C-terminus: Periplasmic nitrate reductase (827 aa).

The tat-type signal signal peptide spans 1 to 33 (MNLSRRDFMKANAAMAAATAAGLTIPVKNVVAA). In terms of domain architecture, 4Fe-4S Mo/W bis-MGD-type spans 37 to 93 (IKWDKGVCRFCGTGCAVLVGTKDGRVVASQGDPDAEVNRGLNCIKGYFLPKIMYGKD). Positions 44, 47, 51, and 79 each coordinate [4Fe-4S] cluster. Residues K81, Q148, N173, C177, 210–217 (WGSNMAEM), 241–245 (STYEH), 260–262 (QTD), M370, Q374, N480, 506–507 (SD), K529, D556, and 716–725 (TGRVLEHWHT) contribute to the Mo-bis(molybdopterin guanine dinucleotide) site. Position 792 (F792) interacts with substrate. N800 and K817 together coordinate Mo-bis(molybdopterin guanine dinucleotide).

This sequence belongs to the prokaryotic molybdopterin-containing oxidoreductase family. NasA/NapA/NarB subfamily. Component of the periplasmic nitrate reductase NapAB complex composed of NapA and NapB. It depends on [4Fe-4S] cluster as a cofactor. Mo-bis(molybdopterin guanine dinucleotide) serves as cofactor. In terms of processing, predicted to be exported by the Tat system. The position of the signal peptide cleavage has not been experimentally proven.

It is found in the periplasm. It catalyses the reaction 2 Fe(II)-[cytochrome] + nitrate + 2 H(+) = 2 Fe(III)-[cytochrome] + nitrite + H2O. Its function is as follows. Catalytic subunit of the periplasmic nitrate reductase complex NapAB. Receives electrons from NapB and catalyzes the reduction of nitrate to nitrite. This Haemophilus influenzae (strain PittEE) protein is Periplasmic nitrate reductase.